A 1382-amino-acid polypeptide reads, in one-letter code: Hepatocyte growth factor receptor (1382 aa).

Residues 1-24 (MKASAVLAPGILALLFTLVQGSDG) form the signal peptide. Residues 25–935 (ECHEALAKSE…VQPDQNFTGL (911 aa)) are Extracellular-facing. In terms of domain architecture, Sema spans 27-516 (HEALAKSEMN…TGKRITKIPL (490 aa)). N-linked (GlcNAc...) asparagine glycans are attached at residues Asn-45, Asn-100, and Asn-106. 4 disulfides stabilise this stretch: Cys-95–Cys-101, Cys-98–Cys-160, Cys-133–Cys-141, and Cys-173–Cys-176. Residues Asn-203 and Asn-359 are each glycosylated (N-linked (GlcNAc...) asparagine). Disulfide bonds link Cys-299/Cys-364 and Cys-386/Cys-398. Asn-400 and Asn-406 each carry an N-linked (GlcNAc...) asparagine glycan. 4 disulfide bridges follow: Cys-521/Cys-539, Cys-527/Cys-562, Cys-530/Cys-546, and Cys-542/Cys-552. IPT/TIG domains lie at 564 to 656 (PAIH…FSYV), 658 to 740 (PVIT…FSYQ), and 743 to 837 (PVVY…LIYV). Thr-583 carries O-linked (Man) threonine glycosylation. Residues Asn-608 and Asn-636 are each glycosylated (N-linked (GlcNAc...) asparagine). O-linked (Man) threonine glycosylation is found at Thr-677 and Thr-762. N-linked (GlcNAc...) asparagine glycans are attached at residues Asn-786, Asn-880, and Asn-931. Residues 936 to 956 (IVGVVSISIILLLLLGLFLWM) form a helical membrane-spanning segment. Topologically, residues 957-1382 (KKRKQIKDLG…QDNINGEVDT (426 aa)) are cytoplasmic. At Ser-967 the chain carries Phosphoserine. Position 978 is a phosphothreonine (Thr-978). 3 positions are modified to phosphoserine: Ser-991, Ser-998, and Ser-1001. At Tyr-1004 the chain carries Phosphotyrosine. The Protein kinase domain maps to 1079 to 1346 (VHFNEVIGRG…RISAIFSTFI (268 aa)). ATP-binding positions include 1085–1093 (IGRGHFGCV) and Lys-1111. The Proton acceptor role is filled by Asp-1205. Residues 1213–1382 (LDEKFTVKVA…QDNINGEVDT (170 aa)) form an interaction with RANBP9 region. Tyr-1231 carries the post-translational modification Phosphotyrosine. A phosphotyrosine; by autocatalysis mark is found at Tyr-1235 and Tyr-1236. A Phosphothreonine modification is found at Thr-1290. Positions 1321–1360 (WHPKAEMRPSFSELVSRISAIFSTFIGEHYVHVNATYVNV) are interaction with MUC20. Phosphotyrosine; by autocatalysis occurs at positions 1350 and 1357. Tyr-1366 carries the phosphotyrosine modification.

Belongs to the protein kinase superfamily. Tyr protein kinase family. As to quaternary structure, heterodimer made of an alpha chain (50 kDa) and a beta chain (145 kDa) which are disulfide linked. Binds PLXNB1. Interacts when phosphorylated with downstream effectors including STAT3, PIK3R1, SRC, PCLG1, GRB2 and GAB1. Interacts with SPSB1, SPSB2 and SPSB4. Interacts with INPP5D/SHIP1. When phosphorylated at Tyr-1357, interacts with INPPL1/SHIP2. Interacts with RANBP9 and RANBP10, as well as SPSB1, SPSB2, SPSB3 and SPSB4. SPSB1 binding occurs in the presence and in the absence of HGF, however HGF treatment has a positive effect on this interaction. Interacts with MUC20; prevents interaction with GRB2 and suppresses hepatocyte growth factor-induced cell proliferation. Interacts with GRB10. Interacts with PTPN1 and PTPN2. Interacts with HSP90AA1 and HSP90AB1; the interaction suppresses MET kinase activity. Interacts with tensin TNS3. Interacts (when phosphorylated) with tensin TNS4 (via SH2 domain); the interaction increases MET protein stability by inhibiting MET endocytosis and subsequent lysosomal degradation. Autophosphorylated in response to ligand binding on Tyr-1235 and Tyr-1236 in the kinase domain leading to further phosphorylation of Tyr-1350 and Tyr-1357 in the C-terminal multifunctional docking site. Dephosphorylated by PTPRJ at Tyr-1350 and Tyr-1366. Dephosphorylated by PTPN1 and PTPN2. In terms of processing, ubiquitinated. Ubiquitination by CBL regulates the receptor stability and activity through proteasomal degradation. Post-translationally, O-mannosylation of IPT/TIG domains by TMEM260 is required for protein maturation. O-mannosylated residues are composed of single mannose glycans that are not elongated or modified.

The protein localises to the membrane. The enzyme catalyses L-tyrosyl-[protein] + ATP = O-phospho-L-tyrosyl-[protein] + ADP + H(+). With respect to regulation, in its inactive state, the C-terminal tail interacts with the catalytic domain and inhibits the kinase activity. Upon ligand binding, the C-terminal tail is displaced and becomes phosphorylated, thus increasing the kinase activity. In terms of biological role, receptor tyrosine kinase that transduces signals from the extracellular matrix into the cytoplasm by binding to hepatocyte growth factor/HGF ligand. Regulates many physiological processes including proliferation, scattering, morphogenesis and survival. Ligand binding at the cell surface induces autophosphorylation of MET on its intracellular domain that provides docking sites for downstream signaling molecules. Following activation by ligand, interacts with the PI3-kinase subunit PIK3R1, PLCG1, SRC, GRB2, STAT3 or the adapter GAB1. Recruitment of these downstream effectors by MET leads to the activation of several signaling cascades including the RAS-ERK, PI3 kinase-AKT, or PLCgamma-PKC. The RAS-ERK activation is associated with the morphogenetic effects while PI3K/AKT coordinates prosurvival effects. During embryonic development, MET signaling plays a role in gastrulation, development and migration of muscles and neuronal precursors, angiogenesis and kidney formation. In adults, participates in wound healing as well as organ regeneration and tissue remodeling. Also promotes differentiation and proliferation of hematopoietic cells. The chain is Hepatocyte growth factor receptor (MET) from Microcebus murinus (Gray mouse lemur).